The primary structure comprises 488 residues: ATP synthase subunit beta (488 aa).

Residue 164–171 (GGAGVGKT) participates in ATP binding.

The protein belongs to the ATPase alpha/beta chains family. F-type ATPases have 2 components, CF(1) - the catalytic core - and CF(0) - the membrane proton channel. CF(1) has five subunits: alpha(3), beta(3), gamma(1), delta(1), epsilon(1). CF(0) has four main subunits: a(1), b(1), b'(1) and c(9-12).

The protein resides in the cellular thylakoid membrane. It carries out the reaction ATP + H2O + 4 H(+)(in) = ADP + phosphate + 5 H(+)(out). Produces ATP from ADP in the presence of a proton gradient across the membrane. The catalytic sites are hosted primarily by the beta subunits. The protein is ATP synthase subunit beta of Prochlorococcus marinus (strain MIT 9303).